A 2453-amino-acid polypeptide reads, in one-letter code: Tyrosine-protein phosphatase non-receptor type 13 (2453 aa).

The 188-residue stretch at 3–190 (VSLAEALEVR…SGTDPLSRSS (188 aa)) folds into the KIND domain. The tract at residues 183–227 (TDPLSRSSEQKPDRSQAIRDRLRGKGLPTGRSSTSDALDTHEAPL) is disordered. The segment covering 190–205 (SEQKPDRSQAIRDRLR) has biased composition (basic and acidic residues). The residue at position 240 (serine 240) is a Phosphoserine. Residues 253-285 (EDYLKDTPSDNNSRHEDSETFSSPYQFKTSTPQ) form a disordered region. Over residues 256–270 (LKDTPSDNNSRHEDS) the composition is skewed to basic and acidic residues. A compositionally biased stretch (polar residues) spans 272-285 (TFSSPYQFKTSTPQ). Serine 297 and serine 298 each carry phosphoserine. The tract at residues 429–457 (SEASKRFESSSGLPGVDETGQTRPSRQYE) is disordered. Residues 447–457 (TGQTRPSRQYE) are compositionally biased toward polar residues. A coiled-coil region spans residues 458-493 (TSLEGNLINQDIMLRRQEEEMMQLQARMALRQSRLS). Residues 565–865 (RKVNIRLLSG…SQHKFQLQMR (301 aa)) form the FERM domain. Serine 883, serine 890, serine 901, serine 904, and serine 907 each carry phosphoserine. The span at 944–957 (KEKTDKASWEEKPR) shows a compositional bias: basic and acidic residues. Disordered stretches follow at residues 944 to 966 (KEKT…YHDL) and 1007 to 1063 (LAGL…VPFK). 2 positions are modified to phosphoserine: serine 1021 and serine 1025. The span at 1025–1034 (SPERRNHESD) shows a compositional bias: basic and acidic residues. The segment covering 1049–1058 (SLPSSGKSSS) has biased composition (low complexity). Phosphoserine is present on serine 1076. Positions 1084-1170 (LVNLKKDPKH…DVTLVISQPK (87 aa)) constitute a PDZ 1 domain. Disordered regions lie at residues 1199–1356 (DSAM…GDTF) and 1441–1478 (GQVP…TPHV). Serine 1221 bears the Phosphoserine mark. 2 stretches are compositionally biased toward polar residues: residues 1242 to 1252 (ESASLSQSQVN) and 1267 to 1279 (PQHS…VTTK). At serine 1270 the chain carries Phosphoserine. The span at 1297–1315 (GISDLIEHLDCADSDKDDS) shows a compositional bias: basic and acidic residues. Low complexity predominate over residues 1331–1341 (SSSLSTSNKTS). The PDZ 2 domain maps to 1357–1442 (EVELAKTDGS…VVHLLLEKGQ (86 aa)). A compositionally biased stretch (basic and acidic residues) spans 1467 to 1478 (APEKVAKQTPHV). In terms of domain architecture, PDZ 3 spans 1491 to 1579 (EVKLFKNSSG…EVSLLLCRPA (89 aa)). The segment covering 1602–1629 (LNSSKETSQPSSSVEQGASSDDNGVSGK) has biased composition (polar residues). Disordered regions lie at residues 1602 to 1662 (LNSS…AKMP) and 1695 to 1726 (KLES…SDAT). Residues 1638–1655 (SRRESYSDHSESGEDDSV) show a composition bias toward basic and acidic residues. PDZ domains follow at residues 1764-1845 (LITL…GRIL) and 1857-1942 (LPDI…TRDG). Disordered stretches follow at residues 1991 to 2024 (EAVC…DDIY) and 2051 to 2139 (RHAT…DPPF). A compositionally biased stretch (basic and acidic residues) spans 2012–2021 (ETKESNSRDD). Residues 2180-2434 (PSKELENLQE…VFCYQVILYV (255 aa)) enclose the Tyrosine-protein phosphatase domain. Substrate-binding positions include aspartate 2345, 2375-2381 (CSAGIGR), and glutamine 2419. The active-site Phosphocysteine intermediate is cysteine 2375.

It belongs to the protein-tyrosine phosphatase family. Non-receptor class subfamily. As to quaternary structure, interacts (via the first PDZ domain) with PLEKHA1 and PLEKHA2. Interacts (via the second PDZ domain) with TNFRSF6 (Fas receptor) (via C-terminus). Interacts (via the second PDZ domain) with TRIP6 (via the third LIM domain and C-terminus). Interacts (via the third PDZ domain) with NGFR (via C-terminal SVP motif) and PKN2 (via C-terminus). Interacts (via the second or fourth PDZ domains) with PDLIM4 (via C-terminus only or via combined C-terminus and LIM domain, but not LIM domain only). Found in a complex with PDLIM4 and TRIP6. Interacts with PDLIM4; this interaction results in dephosphorylation of SRC 'Tyr-419' by this protein leading to its inactivation. Interacts with BRD7. Interacts with RAPGEF6. Interacts with ARHGAP29. Interacts with PIK3R2; dephosphorylates PIK3R2. Interacts with FBXL2. Interacts (via the FERM domain) with ENTR1. Found in a complex with ENTR1, PTPN13 and GIT1. Expressed predominantly in kidney and, to a lesser extent, in lung, heart, brain and testis.

It is found in the cytoplasm. The protein resides in the cytoskeleton. It localises to the nucleus. The protein localises to the cell projection. Its subcellular location is the lamellipodium. The catalysed reaction is O-phospho-L-tyrosyl-[protein] + H2O = L-tyrosyl-[protein] + phosphate. Its function is as follows. Tyrosine phosphatase which negatively regulates FAS-induced apoptosis and NGFR-mediated pro-apoptotic signaling. May regulate phosphoinositide 3-kinase (PI3K) signaling through dephosphorylation of PIK3R2. This Mus musculus (Mouse) protein is Tyrosine-protein phosphatase non-receptor type 13 (Ptpn13).